A 300-amino-acid chain; its full sequence is MDVLRTPDSRFEHLVGYPFAPHYVDVTAGDTQPLRMHYVDEGPGDGPPIVLLHGEPTWSYLYRTMIPPLSAAGHRVLAPDLIGFGRSDKPTRIEDYTYLRHVEWVTSWFENLDLHDVTLFVQDWGSLIGLRIAAEHGDRIARLVVANGFLPAAQGRTPLPFYVWRAFARYSPVLPAGRLVNFGTVHRVPAGVRAGYDAPFPDKTYQAGARAFPRLVPTSPDDPAVPANRAAWEALGRWDKPFLAIFGYRDPILGQADGPLIKHIPGAAGQPHARIKASHFIQEDSGTELAERMLSWQQAT.

An AB hydrolase-1 domain is found at 47–176 (PPIVLLHGEP…FARYSPVLPA (130 aa)). D123 functions as the Nucleophile in the catalytic mechanism. The Proton donor role is filled by D250. H279 functions as the Proton acceptor in the catalytic mechanism.

This sequence belongs to the haloalkane dehalogenase family. Type 1 subfamily. Monomer.

The enzyme catalyses 1-haloalkane + H2O = a halide anion + a primary alcohol + H(+). In terms of biological role, catalyzes hydrolytic cleavage of carbon-halogen bonds in halogenated aliphatic compounds, leading to the formation of the corresponding primary alcohols, halide ions and protons. This Mycobacterium bovis (strain ATCC BAA-935 / AF2122/97) protein is Haloalkane dehalogenase 1 (dhmA1).